The following is a 1338-amino-acid chain: P-type sodium-transporting ATPase4 (1338 aa).

A disordered region spans residues Met-1–His-106. Residues Ala-55–Arg-69 show a composition bias toward basic and acidic residues. Over residues Gly-91–Gln-104 the composition is skewed to polar residues. A run of 8 helical transmembrane segments spans residues Ile-229 to Ser-249, Trp-255 to Met-275, Leu-418 to Ile-438, Ile-456 to Val-476, Phe-985 to Ala-1005, Ile-1068 to Val-1088, Met-1261 to Ile-1281, and Cys-1288 to Leu-1308.

It belongs to the cation transport ATPase (P-type) (TC 3.A.3) family.

It is found in the cell membrane. The catalysed reaction is Na(+)(in) + ATP + H2O = Na(+)(out) + ADP + phosphate + H(+). Inhibited by cipargamin, a synthetic spiroindolone. Inhibited by pyrazoleamide PA21A050, structurally unrelated to the spiroindolones. Inhibited by (+)-SJ733, a dihydroisoquinolone compound. In terms of biological role, sodium-exporting ATPase. Required for the extrusion of Na(+) from the parasites to maintain a low cytosolic concentration of Na(+). Required for maintaining the viability of extracellular parasites but not for intracellular growth, egress or invasion. Involved in parasite virulence. The sequence is that of P-type sodium-transporting ATPase4 from Toxoplasma gondii (strain ATCC 50861 / VEG).